The sequence spans 332 residues: NADH-quinone oxidoreductase subunit H (332 aa).

Helical transmembrane passes span 4-24 (FAFF…IFAS), 44-64 (IGPD…MIKL), 78-98 (FIFA…LAAI), 120-140 (VALL…FLGG), 165-185 (VGAL…LVDI), 194-214 (FSWL…ALFI), 255-275 (IAGA…FWII), 279-299 (IMMI…RAAF), and 312-332 (YLIL…AVLL).

Belongs to the complex I subunit 1 family. In terms of assembly, NDH-1 is composed of 14 different subunits. Subunits NuoA, H, J, K, L, M, N constitute the membrane sector of the complex.

The protein localises to the cell inner membrane. The enzyme catalyses a quinone + NADH + 5 H(+)(in) = a quinol + NAD(+) + 4 H(+)(out). Its function is as follows. NDH-1 shuttles electrons from NADH, via FMN and iron-sulfur (Fe-S) centers, to quinones in the respiratory chain. The immediate electron acceptor for the enzyme in this species is believed to be ubiquinone. Couples the redox reaction to proton translocation (for every two electrons transferred, four hydrogen ions are translocated across the cytoplasmic membrane), and thus conserves the redox energy in a proton gradient. This subunit may bind ubiquinone. The protein is NADH-quinone oxidoreductase subunit H of Campylobacter jejuni (strain RM1221).